The primary structure comprises 502 residues: Glycerol kinase (502 aa).

Residue Thr14 coordinates ADP. Residues Thr14, Thr15, and Ser16 each coordinate ATP. Sn-glycerol 3-phosphate is bound at residue Thr14. Arg18 contributes to the ADP binding site. Sn-glycerol 3-phosphate-binding residues include Arg84, Glu85, Tyr136, and Asp246. Residues Arg84, Glu85, Tyr136, Asp246, and Gln247 each contribute to the glycerol site. Positions 268 and 311 each coordinate ADP. The ATP site is built by Thr268, Gly311, Gln315, and Gly412. ADP-binding residues include Gly412 and Asn416.

It belongs to the FGGY kinase family. Homotetramer and homodimer (in equilibrium). Heterodimer with EIIA-Glc. Binds 1 zinc ion per glycerol kinase EIIA-Glc dimer. The zinc ion is important for dimerization.

It carries out the reaction glycerol + ATP = sn-glycerol 3-phosphate + ADP + H(+). The protein operates within polyol metabolism; glycerol degradation via glycerol kinase pathway; sn-glycerol 3-phosphate from glycerol: step 1/1. Activity of this regulatory enzyme is affected by several metabolites. Allosterically and non-competitively inhibited by fructose 1,6-bisphosphate (FBP) and unphosphorylated phosphocarrier protein EIIA-Glc (III-Glc), an integral component of the bacterial phosphotransferase (PTS) system. Its function is as follows. Key enzyme in the regulation of glycerol uptake and metabolism. Catalyzes the phosphorylation of glycerol to yield sn-glycerol 3-phosphate. The chain is Glycerol kinase from Escherichia coli O7:K1 (strain IAI39 / ExPEC).